A 91-amino-acid polypeptide reads, in one-letter code: MNASNWSLYLILCENSAFYCGISPNPQQRLAAHTAGKGAKYTRVFKPVAMRIVAGGMDKGTALRQEIAVKKLTAAQKRKLWEQAEKMPSET.

Residues S4–Q83 form the GIY-YIG domain.

It belongs to the UPF0213 family.

This Neisseria meningitidis serogroup A / serotype 4A (strain DSM 15465 / Z2491) protein is UPF0213 protein NMA2126.